The chain runs to 366 residues: Putative RING-H2 finger protein ATL21C (366 aa).

Positions 1-23 (MTFSKQLFPFVFFLLFLVSLRHA) are cleaved as a signal peptide. Residues 243–263 (LVLVISLSAVTVFVFPTCIAI) traverse the membrane as a helical segment. The segment at 320 to 362 (CPICLSEYASKETVRFIPECDHCFHVECIDVWLKIHGSCPLCR) adopts an RING-type; atypical zinc-finger fold.

Belongs to the RING-type zinc finger family. ATL subfamily.

The protein resides in the membrane. It catalyses the reaction S-ubiquitinyl-[E2 ubiquitin-conjugating enzyme]-L-cysteine + [acceptor protein]-L-lysine = [E2 ubiquitin-conjugating enzyme]-L-cysteine + N(6)-ubiquitinyl-[acceptor protein]-L-lysine.. It functions in the pathway protein modification; protein ubiquitination. This chain is Putative RING-H2 finger protein ATL21C (ATL21C), found in Arabidopsis thaliana (Mouse-ear cress).